The sequence spans 351 residues: Ribosomal RNA large subunit methyltransferase M (351 aa).

S-adenosyl-L-methionine is bound by residues serine 183, 216–219 (APGG), aspartate 235, aspartate 255, and aspartate 271. Lysine 300 serves as the catalytic Proton acceptor.

It belongs to the class I-like SAM-binding methyltransferase superfamily. RNA methyltransferase RlmE family. RlmM subfamily. In terms of assembly, monomer.

Its subcellular location is the cytoplasm. The catalysed reaction is cytidine(2498) in 23S rRNA + S-adenosyl-L-methionine = 2'-O-methylcytidine(2498) in 23S rRNA + S-adenosyl-L-homocysteine + H(+). Its function is as follows. Catalyzes the 2'-O-methylation at nucleotide C2498 in 23S rRNA. This Ectopseudomonas mendocina (strain ymp) (Pseudomonas mendocina) protein is Ribosomal RNA large subunit methyltransferase M.